The following is a 341-amino-acid chain: Very-long-chain 3-oxoacyl-CoA reductase (341 aa).

Residues 22–42 (AIYGFLLAGVAAFAAPIVSTI) form a helical membrane-spanning segment. Residues leucine 67, aspartate 123, aspartate 131, asparagine 150, tyrosine 217, lysine 221, isoleucine 250, and threonine 252 each contribute to the NADP(+) site. The active-site Proton donor is tyrosine 217. Lysine 221 acts as the Lowers pKa of active site Tyr in catalysis.

Belongs to the short-chain dehydrogenases/reductases (SDR) family.

It is found in the endoplasmic reticulum membrane. It catalyses the reaction a very-long-chain (3R)-3-hydroxyacyl-CoA + NADP(+) = a very-long-chain 3-oxoacyl-CoA + NADPH + H(+). Its pathway is lipid metabolism; fatty acid biosynthesis. Its function is as follows. Component of the microsomal membrane bound fatty acid elongation system, which produces the 26-carbon very long-chain fatty acids (VLCFA) from palmitate. Catalyzes the reduction of the 3-ketoacyl-CoA intermediate that is formed in each cycle of fatty acid elongation. VLCFAs serve as precursors for ceramide and sphingolipids. In Phaeosphaeria nodorum (strain SN15 / ATCC MYA-4574 / FGSC 10173) (Glume blotch fungus), this protein is Very-long-chain 3-oxoacyl-CoA reductase.